The sequence spans 282 residues: Undecaprenyl-diphosphatase (282 aa).

7 helical membrane passes run 40–60 (GAAF…IYFY), 87–107 (MGWM…LFKT), 116–136 (LYWI…AEWL), 153–173 (IGWK…IPGS), 196–216 (FSFL…LYET), 229–249 (NLAV…AFLI), and 256–276 (STAL…GLIA).

This sequence belongs to the UppP family.

The protein localises to the cell inner membrane. The catalysed reaction is di-trans,octa-cis-undecaprenyl diphosphate + H2O = di-trans,octa-cis-undecaprenyl phosphate + phosphate + H(+). Functionally, catalyzes the dephosphorylation of undecaprenyl diphosphate (UPP). Confers resistance to bacitracin. The polypeptide is Undecaprenyl-diphosphatase (Chlorobium phaeobacteroides (strain BS1)).